The chain runs to 622 residues: Chaperone protein HscA homolog (622 aa).

The protein belongs to the heat shock protein 70 family.

In terms of biological role, chaperone involved in the maturation of iron-sulfur cluster-containing proteins. Has a low intrinsic ATPase activity which is markedly stimulated by HscB. This is Chaperone protein HscA homolog from Pseudoalteromonas atlantica (strain T6c / ATCC BAA-1087).